Here is a 411-residue protein sequence, read N- to C-terminus: Methylthioribose-1-phosphate isomerase (411 aa).

Residue Ser-2 is modified to N-acetylserine. The active-site Proton donor is Asp-280. Ser-351 carries the post-translational modification Phosphoserine.

It belongs to the eIF-2B alpha/beta/delta subunits family. MtnA subfamily. Homodimer.

Its subcellular location is the cytoplasm. It is found in the nucleus. The catalysed reaction is 5-(methylsulfanyl)-alpha-D-ribose 1-phosphate = 5-(methylsulfanyl)-D-ribulose 1-phosphate. Its pathway is amino-acid biosynthesis; L-methionine biosynthesis via salvage pathway; L-methionine from S-methyl-5-thio-alpha-D-ribose 1-phosphate: step 1/6. In terms of biological role, catalyzes the interconversion of methylthioribose-1-phosphate (MTR-1-P) into methylthioribulose-1-phosphate (MTRu-1-P). The protein is Methylthioribose-1-phosphate isomerase of Saccharomyces cerevisiae (strain RM11-1a) (Baker's yeast).